Here is a 364-residue protein sequence, read N- to C-terminus: Growth hormone secretagogue receptor type 1 (364 aa).

At 1–40 (MWNATPSEEPEPNVTLDLDWDASPGNDSLSDELLPLFPAP) the chain is on the extracellular side. N-linked (GlcNAc...) asparagine glycosylation is found at asparagine 13 and asparagine 26. The helical transmembrane segment at 41–66 (LLAGVTATCVALFVVGISGNLLTMLV) threads the bilayer. The Cytoplasmic segment spans residues 67–72 (VSRFRE). The chain crosses the membrane as a helical span at residues 73–96 (LRTTTNLYLSSMAFSDLLIFLCMP). Residues 97 to 117 (LDLVRLWQYRPWNFGDLLCKL) are Extracellular-facing. The cysteines at positions 115 and 197 are disulfide-linked. A helical membrane pass occupies residues 118 to 139 (FQFVSESCTYATVLTITALSVE). Residues 140-162 (RYFAICFPLRAKVVVTKGRVKLV) lie on the Cytoplasmic side of the membrane. Residues 163 to 183 (ILVIWAVAFCSAGPIFVLVGV) form a helical membrane-spanning segment. At 184-211 (EHENGTDPRDTNECRATEFAVRSGLLTV) the chain is on the extracellular side. Asparagine 187 is a glycosylation site (N-linked (GlcNAc...) asparagine). The helical transmembrane segment at 212 to 235 (MVWVSSVFFFLPVFCLTVLYSLIG) threads the bilayer. At 236-263 (RKLWRRRGDAAVGSSLRDQNHKQTVKML) the chain is on the cytoplasmic side. A helical membrane pass occupies residues 264 to 285 (AVVVFAFILCWLPFHVGRYLFS). The Extracellular segment spans residues 286–302 (KSFEPGSLEIAQISQYC). Residues 303–326 (NLVSFVLFYLSAAINPILYNIMSK) traverse the membrane as a helical segment. Residues 327 to 364 (KYRVAVFKLLGFESFSQRKLSTLKDESSRAWTKSSINT) lie on the Cytoplasmic side of the membrane.

It belongs to the G-protein coupled receptor 1 family.

The protein resides in the cell membrane. Receptor for ghrelin, coupled to G-alpha-11 proteins. Stimulates growth hormone secretion. Also binds other growth hormone releasing peptides (GHRP) (e.g. Met-enkephalin and GHRP-6) as well as non-peptide, low molecular weight secretagogues (e.g. L-692,429, MK-0677, adenosine). This is Growth hormone secretagogue receptor type 1 (Ghsr) from Mus musculus (Mouse).